We begin with the raw amino-acid sequence, 528 residues long: Abrin-a (528 aa).

Glutamine 1 is modified (pyrrolidone carboxylic acid). Glutamate 164 is a catalytic residue. Intrachain disulfides connect cysteine 247–cysteine 269, cysteine 286–cysteine 305, and cysteine 329–cysteine 346. Residues tyrosine 273–glycine 400 enclose the Ricin B-type lectin 1 domain. Residues aspartate 283–serine 325 form a 1-alpha repeat. The 1-beta repeat unit spans residues asparagine 326–asparagine 366. Asparagine 361 and asparagine 401 each carry an N-linked (GlcNAc...) asparagine glycan. Residues serine 369–asparagine 401 form a 1-gamma repeat. One can recognise a Ricin B-type lectin 2 domain in the interval threonine 403–leucine 527. Residues serine 414 to serine 449 form a 2-alpha repeat. Cystine bridges form between cysteine 417–cysteine 430 and cysteine 456–cysteine 473. Residues threonine 453–serine 492 form a 2-beta repeat. The stretch at aspartate 495–phenylalanine 528 is one 2-gamma repeat.

It in the N-terminal section; belongs to the ribosome-inactivating protein family. Type 2 RIP subfamily. Disulfide-linked dimer of A and B chains.

It catalyses the reaction Endohydrolysis of the N-glycosidic bond at one specific adenosine on the 28S rRNA.. The A chain is responsible for inhibiting protein synthesis through the catalytic inactivation of 60S ribosomal subunits by removing adenine from position 4,324 of 28S rRNA. Abrin-a is more toxic than ricin. Its function is as follows. The B chain is a galactose-specific lectin that facilitates the binding of abrin to the cell membrane that precedes endocytosis. This chain is Abrin-a, found in Abrus precatorius (Indian licorice).